We begin with the raw amino-acid sequence, 123 residues long: Fluoride-specific ion channel FluC (123 aa).

A run of 4 helical transmembrane segments spans residues 3-23 (IAWVALGGAIGAVARYVLSNA), 34-54 (WGTLSVNLLGSFIMGLLFYLF), 67-87 (LVLVGGLGAFTTFSTFSLETL), and 99-119 (LLNMLSSVLLCVLAAYLGLVV). Residues Gly-74 and Thr-77 each contribute to the Na(+) site.

This sequence belongs to the fluoride channel Fluc/FEX (TC 1.A.43) family.

It is found in the cell inner membrane. The catalysed reaction is fluoride(in) = fluoride(out). With respect to regulation, na(+) is not transported, but it plays an essential structural role and its presence is essential for fluoride channel function. In terms of biological role, fluoride-specific ion channel. Important for reducing fluoride concentration in the cell, thus reducing its toxicity. The protein is Fluoride-specific ion channel FluC of Magnetococcus marinus (strain ATCC BAA-1437 / JCM 17883 / MC-1).